The primary structure comprises 259 residues: Ras-related protein Rab-34 (259 aa).

The residue at position 1 (Met1) is an N-acetylmethionine. GTP is bound by residues Ser62, Val63, Gly64, Lys65, Thr66, Asp78, Tyr81, and Thr84. Thr66 contributes to the Mg(2+) binding site. Positions 71-89 match the Switch 1 motif; the sequence is RFCKDTFDKNYKATIGVDF. Mg(2+)-binding residues include Thr84 and Asp107. Residues 108 to 127 carry the Switch 2 motif; it reads TAGQERFKCIASTYYRGAQA. The GTP site is built by Gly110, Lys167, Asp169, and Ser198. Ser241 is modified (phosphoserine). Residues Cys257 and Cys258 are each lipidated (S-geranylgeranyl cysteine).

This sequence belongs to the small GTPase superfamily. Rab family. As to quaternary structure, interacts with RILP. The GTP-bound form interacts with REP15. The cofactor is Mg(2+).

The protein localises to the cytoplasm. It localises to the golgi apparatus. Its subcellular location is the cytoplasmic vesicle. The protein resides in the phagosome. It is found in the phagosome membrane. The protein localises to the cell projection. It localises to the cilium. Its subcellular location is the cytoskeleton. The protein resides in the microtubule organizing center. It is found in the centrosome. The protein localises to the centriole. The catalysed reaction is GTP + H2O = GDP + phosphate + H(+). With respect to regulation, regulated by guanine nucleotide exchange factors (GEFs) which promote the exchange of bound GDP for free GTP. Regulated by GTPase activating proteins (GAPs) which increase the GTP hydrolysis activity. Inhibited by GDP dissociation inhibitors (GDIs). The small GTPases Rab are key regulators of intracellular membrane trafficking, from the formation of transport vesicles to their fusion with membranes. Rabs cycle between an inactive GDP-bound form and an active GTP-bound form that is able to recruit to membranes different sets of downstream effectors directly responsible for vesicle formation, movement, tethering and fusion. RAB34 transports protein involved in the redistribution of lysosomes to the peri-Golgi region. Plays a role in the maturation of phagosomes that engulf pathogens, such as S.aureus and M.tuberculosis. Plays a role in the fusion of phagosomes with lysosomes. Involved in ciliogenesis. In particular, it is required for early steps of the intracellular cilium assembly pathway initiated by trafficking and docking of ciliary vesicles to the centrioles in the cytoplasm, followed by axoneme formation in the cytoplasm. After axoneme elongation, the centrioles migrate close to the cell surface so that ciliary vesicles can fuse with the plasma membrane to expose cilia to the extracellular space. It seems dispensable for ciliogenesis via the extracellular pathway where cilium assembly begins after migration and docking of the centriole to the plasma membrane. Also acts as a positive regulator of hedgehog signaling and regulates ciliary function. This Rattus norvegicus (Rat) protein is Ras-related protein Rab-34.